Reading from the N-terminus, the 266-residue chain is MICOS complex subunit MIC27 (266 aa).

The transit peptide at 1 to 27 directs the protein to the mitochondrion; the sequence is MAAIRMGKLTTMPAGLIYASVSVHAAK. The Mitochondrial intermembrane portion of the chain corresponds to 28 to 110; it reads EEESKKQLVK…YVYMKNPPRD (83 aa). Residues 111–129 traverse the membrane as a helical segment; that stretch reads FLPKMGVITVSGLAGLVSA. The Mitochondrial matrix segment spans residues 130–137; sequence RKGSKFKK. The helical transmembrane segment at 138 to 155 threads the bilayer; it reads ITYPLGLATLGATVCYPV. Residues 156 to 266 lie on the Mitochondrial intermembrane side of the membrane; the sequence is QSVIIAKVTA…NVTNSGVLRI (111 aa). Ser-204 is modified (phosphoserine).

Belongs to the apolipoprotein O/MICOS complex subunit Mic27 family. In terms of assembly, component of the mitochondrial contact site and cristae organizing system (MICOS) complex, composed of at least MICOS10/MIC10, CHCHD3/MIC19, CHCHD6/MIC25, APOOL/MIC27, IMMT/MIC60, APOO/MIC23/MIC26 and MICOS13/MIC13. This complex was also known under the names MINOS or MitOS complex. The MICOS complex associates with mitochondrial outer membrane proteins SAMM50, MTX1 and MTX2 (together described as components of the mitochondrial outer membrane sorting assembly machinery (SAM) complex) and DNAJC11, mitochondrial inner membrane protein TMEM11 and with HSPA9. The MICOS and SAM complexes together with DNAJC11 are part of a large protein complex spanning both membranes termed the mitochondrial intermembrane space bridging (MIB) complex. Interacts with MICOS10/MIC10, IMMT/MIC60 and APOO/MIC23/MIC26.

Its subcellular location is the mitochondrion inner membrane. The protein localises to the mitochondrion. Functionally, component of the MICOS complex, a large protein complex of the mitochondrial inner membrane that plays crucial roles in the maintenance of crista junctions, inner membrane architecture, and formation of contact sites to the outer membrane. Specifically binds to cardiolipin (in vitro) but not to the precursor lipid phosphatidylglycerol. Plays a crucial role in crista junction formation and mitochondrial function. The sequence is that of MICOS complex subunit MIC27 (APOOL) from Pongo abelii (Sumatran orangutan).